Reading from the N-terminus, the 385-residue chain is 1-deoxy-D-xylulose 5-phosphate reductoisomerase (385 aa).

Positions 11, 12, 13, 14, 39, and 117 each coordinate NADPH. Residue K118 coordinates 1-deoxy-D-xylulose 5-phosphate. E119 serves as a coordination point for NADPH. D143 contributes to the Mn(2+) binding site. S144, E145, S170, and H193 together coordinate 1-deoxy-D-xylulose 5-phosphate. Mn(2+) is bound at residue E145. G199 provides a ligand contact to NADPH. Residues S206, N211, K212, and E215 each coordinate 1-deoxy-D-xylulose 5-phosphate. Residue E215 participates in Mn(2+) binding.

This sequence belongs to the DXR family. Mg(2+) is required as a cofactor. It depends on Mn(2+) as a cofactor.

It catalyses the reaction 2-C-methyl-D-erythritol 4-phosphate + NADP(+) = 1-deoxy-D-xylulose 5-phosphate + NADPH + H(+). Its pathway is isoprenoid biosynthesis; isopentenyl diphosphate biosynthesis via DXP pathway; isopentenyl diphosphate from 1-deoxy-D-xylulose 5-phosphate: step 1/6. Functionally, catalyzes the NADPH-dependent rearrangement and reduction of 1-deoxy-D-xylulose-5-phosphate (DXP) to 2-C-methyl-D-erythritol 4-phosphate (MEP). The polypeptide is 1-deoxy-D-xylulose 5-phosphate reductoisomerase (Thermomicrobium roseum (strain ATCC 27502 / DSM 5159 / P-2)).